A 400-amino-acid chain; its full sequence is ATP-dependent rRNA helicase RRP3 (400 aa).

Positions 1–29 (MEFGDLRIDESLIKTCQEKGITRPTEVQR) match the Q motif motif. The region spanning 32–202 (IPAVLGGGDV…SSILKRPKTI (171 aa)) is the Helicase ATP-binding domain. Residue 45 to 52 (SQTGSGKT) coordinates ATP. The DEAD box signature appears at 150-153 (DEAD). One can recognise a Helicase C-terminal domain in the interval 229–373 (ALVELLEMSQ…EFKMMKKNFG (145 aa)).

It belongs to the DEAD box helicase family. DDX47/RRP3 subfamily. Interacts with the SSU processome.

The protein localises to the nucleus. It catalyses the reaction ATP + H2O = ADP + phosphate + H(+). Its function is as follows. ATP-dependent rRNA helicase required for pre-ribosomal RNA processing. Involved in the maturation of the 35S-pre-rRNA and to its cleavage to mature 18S rRNA. The protein is ATP-dependent rRNA helicase RRP3 of Encephalitozoon cuniculi (strain GB-M1) (Microsporidian parasite).